Here is a 346-residue protein sequence, read N- to C-terminus: Protein NDL1 (346 aa).

This sequence belongs to the NDRG family. In terms of assembly, interacts with GB1. Interacts with the heterodimers formed by GB1 and GG1, or GB1 and GG2. Interacts with RGS1. Expressed in root vasculature, cotyledons, leaves, petals, mature stamens and pollen grains.

It is found in the cytoplasm. Its function is as follows. Interacts with the heterotrimeric G protein beta subunit GB1 and plays an significant role in GB1-dependent regulation of lateral root formation. Involved in a signaling pathway that modulates root auxin transport and auxin gradients. Acts partially by positively regulating the auxin carrier PIN2 and AUX1. Acts, together with GB1 as positive regulator of meristem initiation and branching. GB1 and NDL1 positively regulate basipetal inflorescence auxin transport and modulate MAX2 expression in shoots, which regulates organ and lateral meristem formation by the establishment and maintenance of auxin gradients. The protein is Protein NDL1 of Arabidopsis thaliana (Mouse-ear cress).